A 442-amino-acid polypeptide reads, in one-letter code: Pyruvate dehydrogenase complex protein X component, mitochondrial (442 aa).

The N-terminal 35 residues, 1-35, are a transit peptide targeting the mitochondrion; it reads MASLAAACRVSARLAARKLQHDAAVRGFRSSAAAL. The region spanning 37–113 is the Lipoyl-binding domain; it reads AQNFMMPALS…QVGTRIAVVA (77 aa). Residue Lys-78 is modified to N6-lipoyllysine. The segment at 119–169 is disordered; sequence ITKLEIPPDEGPQQLKAAAPAPAPTPAPAPASPQPQFAAPTPSPPKASTKV. Pro residues predominate over residues 139–151; sequence APAPTPAPAPASP. Positions 152–169 are enriched in low complexity; the sequence is QPQFAAPTPSPPKASTKV. In terms of domain architecture, Peripheral subunit-binding (PSBD) spans 175–215; it reads PLLPSVHQLIKENGLDESAVSNITPTGPGGRILKGDVLAYL. The segment at 244–269 is disordered; that stretch reads AKPVEPEKPQEEKASAPAPAPRAPEP. Residues 245-257 show a composition bias toward basic and acidic residues; it reads KPVEPEKPQEEKA. Residues 317–336 form an interaction to the E2 core region; that stretch reads PLPTNYQPTADELFDQVLGL.

This sequence belongs to the 2-oxoacid dehydrogenase family. In terms of assembly, eukaryotic pyruvate dehydrogenase (PDH) complexes are organized as a core consisting of the oligomeric dihydrolipoamide acetyl-transferase (E2), around which are arranged multiple copies of pyruvate dehydrogenase (E1), dihydrolipoamide dehydrogenase (E3) and protein X (E3BP) bound by non-covalent bonds. The Chaetomium thermophilum PDH complex contains 60 E2 units, 12 E3BP units, about 20 E1 units, and 12 or more E3 units. The units are organized in 1 E2 60-mer, 4 E3BP trimers, about 20 E1 tetramers, and a maximum of 12 E3 dimers. The E3BP trimers are bound inside the icosahedral core with tetrahedral symmetry.

The protein resides in the mitochondrion. In terms of biological role, the 10-megadalton pyruvate dehydrogenase complex contains multiple copies of three enzymatic components: pyruvate dehydrogenase (E1), dihydrolipoamide acetyltransferase (E2) and lipoamide dehydrogenase (E3) and catalyzes the overall oxidative decarboxylation of pyruvate to form acetyl-CoA and CO(2). E3BP is responsible for tethering E3 in proximity to the core, forming the entire metabolon, and the number of E3s is limited by the number of E3BPs. Within the complex, pyruvate and thiamine pyrophosphate (TPP or vitamin B1) are bound by pyruvate dehydrogenase E1 subunits alpha and beta and pyruvate is decarboxylated leading to the 2-carbon hydrohyethyl bound to TPP. The E2 component contains covalently-bound lipoyl cofactors and transfers the hydroxyethyl group from TPP to an oxidized form of covalently bound lipoamide, and the resulting acetyl group is then transferred to free coenzyme A to form acetyl-CoA and reduced dihydrolipoamide-E2. Finally, the flavoprotein dihydrolipoamide dehydrogenase (E3) re-oxidizes the lipoyl group of dihydrolipoamide-E2 to form lipoamide-E2 and NADH. A fourth subunit, E3BP, is responsible for tethering E3 in proximity to the core, forming the entire metabolon. This is Pyruvate dehydrogenase complex protein X component, mitochondrial from Chaetomium thermophilum (strain DSM 1495 / CBS 144.50 / IMI 039719) (Thermochaetoides thermophila).